The chain runs to 182 residues: NADH-quinone oxidoreductase subunit B 2 (182 aa).

[4Fe-4S] cluster is bound by residues cysteine 57, cysteine 58, cysteine 123, and cysteine 153.

Belongs to the complex I 20 kDa subunit family. NDH-1 is composed of 14 different subunits. Subunits NuoB, C, D, E, F, and G constitute the peripheral sector of the complex. Requires [4Fe-4S] cluster as cofactor.

Its subcellular location is the cell membrane. It carries out the reaction a quinone + NADH + 5 H(+)(in) = a quinol + NAD(+) + 4 H(+)(out). In terms of biological role, NDH-1 shuttles electrons from NADH, via FMN and iron-sulfur (Fe-S) centers, to quinones in the respiratory chain. The immediate electron acceptor for the enzyme in this species is believed to be a menaquinone. Couples the redox reaction to proton translocation (for every two electrons transferred, four hydrogen ions are translocated across the cytoplasmic membrane), and thus conserves the redox energy in a proton gradient. The polypeptide is NADH-quinone oxidoreductase subunit B 2 (Symbiobacterium thermophilum (strain DSM 24528 / JCM 14929 / IAM 14863 / T)).